Consider the following 442-residue polypeptide: L-seryl-tRNA(Sec) selenium transferase (442 aa).

K284 is modified (N6-(pyridoxal phosphate)lysine).

Belongs to the SelA family. Requires pyridoxal 5'-phosphate as cofactor.

The protein localises to the cytoplasm. It carries out the reaction L-seryl-tRNA(Sec) + selenophosphate + H(+) = L-selenocysteinyl-tRNA(Sec) + phosphate. It functions in the pathway aminoacyl-tRNA biosynthesis; selenocysteinyl-tRNA(Sec) biosynthesis; selenocysteinyl-tRNA(Sec) from L-seryl-tRNA(Sec) (bacterial route): step 1/1. Converts seryl-tRNA(Sec) to selenocysteinyl-tRNA(Sec) required for selenoprotein biosynthesis. This is L-seryl-tRNA(Sec) selenium transferase from Campylobacter fetus subsp. fetus (strain 82-40).